A 192-amino-acid polypeptide reads, in one-letter code: Ribosomal RNA large subunit methyltransferase E (192 aa).

The S-adenosyl-L-methionine site is built by glycine 46, tryptophan 48, aspartate 63, aspartate 79, and aspartate 102. Lysine 142 serves as the catalytic Proton acceptor.

This sequence belongs to the class I-like SAM-binding methyltransferase superfamily. RNA methyltransferase RlmE family.

It localises to the cytoplasm. The enzyme catalyses uridine(2552) in 23S rRNA + S-adenosyl-L-methionine = 2'-O-methyluridine(2552) in 23S rRNA + S-adenosyl-L-homocysteine + H(+). In terms of biological role, specifically methylates the uridine in position 2552 of 23S rRNA at the 2'-O position of the ribose in the fully assembled 50S ribosomal subunit. The protein is Ribosomal RNA large subunit methyltransferase E of Wolbachia pipientis wMel.